The following is a 548-amino-acid chain: Fumarate hydratase class I, aerobic (548 aa).

[4Fe-4S] cluster-binding residues include Cys-105, Cys-224, and Cys-318.

This sequence belongs to the class-I fumarase family. As to quaternary structure, homodimer. It depends on [4Fe-4S] cluster as a cofactor.

The catalysed reaction is (S)-malate = fumarate + H2O. It catalyses the reaction oxaloacetate = enol-oxaloacetate. It participates in carbohydrate metabolism; tricarboxylic acid cycle; (S)-malate from fumarate: step 1/1. Functionally, catalyzes the reversible hydration of fumarate to (S)-malate. Functions as an aerobic enzyme in the direction of malate formation as part of the citric acid cycle. Accounts for about 80% of the fumarase activity when the bacteria grow aerobically. To a lesser extent, also displays D-tartrate dehydratase activity in vitro, but is not able to convert (R)-malate, L-tartrate or meso-tartrate. Can also catalyze the isomerization of enol- to keto-oxaloacetate. This is Fumarate hydratase class I, aerobic from Escherichia coli O6:H1 (strain CFT073 / ATCC 700928 / UPEC).